A 180-amino-acid polypeptide reads, in one-letter code: Large ribosomal subunit protein uL5 (180 aa).

This sequence belongs to the universal ribosomal protein uL5 family. As to quaternary structure, part of the 50S ribosomal subunit; part of the 5S rRNA/L5/L18/L25 subcomplex. Contacts the 5S rRNA and the P site tRNA. Forms a bridge to the 30S subunit in the 70S ribosome.

This is one of the proteins that bind and probably mediate the attachment of the 5S RNA into the large ribosomal subunit, where it forms part of the central protuberance. In the 70S ribosome it contacts protein S13 of the 30S subunit (bridge B1b), connecting the 2 subunits; this bridge is implicated in subunit movement. Contacts the P site tRNA; the 5S rRNA and some of its associated proteins might help stabilize positioning of ribosome-bound tRNAs. The sequence is that of Large ribosomal subunit protein uL5 from Xanthomonas axonopodis pv. citri (strain 306).